Reading from the N-terminus, the 210-residue chain is Ribosomal RNA small subunit methyltransferase G (210 aa).

S-adenosyl-L-methionine-binding positions include Leu-78, 124 to 125 (IE), and Arg-138.

The protein belongs to the methyltransferase superfamily. RNA methyltransferase RsmG family.

It is found in the cytoplasm. It carries out the reaction guanosine(527) in 16S rRNA + S-adenosyl-L-methionine = N(7)-methylguanosine(527) in 16S rRNA + S-adenosyl-L-homocysteine. In terms of biological role, specifically methylates the N7 position of guanine in position 527 of 16S rRNA. In Bordetella bronchiseptica (strain ATCC BAA-588 / NCTC 13252 / RB50) (Alcaligenes bronchisepticus), this protein is Ribosomal RNA small subunit methyltransferase G.